Reading from the N-terminus, the 192-residue chain is Protein MTH_857 (192 aa).

Residues 9 to 192 (DEGRTLVKIA…FQAQIFHEDG (184 aa)) enclose the AMMECR1 domain.

This Methanothermobacter thermautotrophicus (strain ATCC 29096 / DSM 1053 / JCM 10044 / NBRC 100330 / Delta H) (Methanobacterium thermoautotrophicum) protein is Protein MTH_857.